The sequence spans 545 residues: Germacrene D synthase 1 (545 aa).

4 residues coordinate Mg(2+): Asp-298, Asp-302, Asn-443, and Glu-451. Residues 298 to 302 (DDTFD) carry the DDXXD motif motif.

This sequence belongs to the terpene synthase family. Mg(2+) serves as cofactor.

Its subcellular location is the cytoplasm. It localises to the cytosol. It catalyses the reaction (2E,6E)-farnesyl diphosphate = (-)-germacrene D + diphosphate. It functions in the pathway secondary metabolite biosynthesis; terpenoid biosynthesis. Sesquiterpene synthase involved in germacrene D biosynthesis. Also produces at least 13 additional sesquiterpene products, including germacrene C and (+)-germacrene A, beta-ylangene, (E)-beta-farnesene and (E,E)-alpha-farnesene. In Pogostemon cablin (Patchouli), this protein is Germacrene D synthase 1.